Reading from the N-terminus, the 1433-residue chain is MWSLTASEGESTTAHFFLGAGDEGLGTRGIGMRPEESDSELLEDEEDEVPPEPQIIVGICAMTKKSKSKPMTQILERLCRFDYLTVVILGEDVILNEPVENWPSCHCLISFHSKGFPLDKAVAYSKLRNPFLINDLAMQYYIQDRREVYRILQEEGIDLPRYAVLNRDPARPEECNLIEGEDQVEVNGAVFPKPFVEKPVSAEDHNVYIYYPSSAGGGSQRLFRKIGSRSSVYSPESSVRKTGSYIYEEFMPTDGTDVKVYTVGPDYAHAEARKSPALDGKVERDSEGKEIRYPVMLTAMEKLVARKVCVAFKQTVCGFDLLRANGHSFVCDVNGFSFVKNSMKYYDDCAKILGNTIMRELAPQFQIPWSIPTEAEDIPIVPTTSGTMMELRCVIAIIRHGDRTPKQKMKMEVKHPRFFALFEKHGGYKTGKLKLKRPEQLQEVLDITRLLLAELEKEPGGEIEEKTGKLEQLKSVLEMYGHFSGINRKVQLTYYPHGVKASNEGQDPQRETLAPSLLLVLKWGGELTPAGRVQAEELGRAFRCMYPGGQGDYAGFPGCGLLRLHSTFRHDLKIYASDEGRVQMTAAAFAKGLLALEGELTPILVQMVKSANMNGLLDSDGDSLSSCQHRVKARLHHILQQDAPFGPEDYDQLAPTRSTSLLNSMTIIQNPVKVCDQVFALIENLTHQIRERMQDPRSVDLQLYHSETLELMLQRWSKLERDFRQKSGRYDISKIPDIYDCVKYDVQHNGSLGLQGTAELLRLSKALADVVIPQEYGISREEKLEIAVGFCLPLLRKILLDLQRTHEDESVNKLHPLCYLRYSRGVLSPGRHVRTRLYFTSESHVHSLLSVFRYGGLLDETQDAQWQRALDYLSAISELNYMTQIVIMLYEDNTQDPLSEERFHVELHFSPGVKGVEEEGSAPAGCGFRPASSENEEMKTNQGSMENLCPGKASDEPDRALQTSPQPPEGPGLPRRSPLIRNRKAGSMEVLSETSSSRPGGYRLFSSSRPPTEMKQSGLGSQCTGLFSTTVLGGSSSAPNLQDYARSHGKKLPPASLKHRDELLFVPAVKRFSVSFAKHPTNGFEGCSMVPTIYPLETLHNALSLRQVSEFLSRVCQRHTDAQAQASAALFDSMHSSQASDNPFSPPRTLHSPPLQLQQRSEKPPWYSSGPSSTVSSAGPSSPTTVDGNSQFGFSDQPSLNSHVAEEHQGLGLLQETPGSGAQELSIEGEQELFEPNQSPQVPPMETSQPYEEVSQPCQEVPDISQPCQDISEALSQPCQKVPDISQQCQENHDNGNHTCQEVPHISQPCQKSSQLCQKVSEEVCQLCLENSEEVSQPCQGVSVEVGKLVHKFHVGVGSLVQETLVEVGSPAEEIPEEVIQPYQEFSVEVGRLAQETSAINLLSQGIPEIDKPSQEFPEEIDLQAQEVPEEIN.

64 to 65 (KK) contributes to the substrate binding site. Residues Arg-145, Lys-198, His-205, Arg-224, 248–251 (EEFM), and 257–259 (DVK) each bind ATP. 224–225 (RK) is a substrate binding site. Substrate contacts are provided by Lys-259 and Arg-273. Residues Ser-275, Asp-320, and 332-334 (DVN) contribute to the ATP site. 337-340 (SFVK) is a substrate binding site. The polyphosphoinositide-binding domain stretch occupies residues 382 to 453 (PTTSGTMMEL…VLDITRLLLA (72 aa)). The segment at 915 to 1020 (GVEEEGSAPA…PTEMKQSGLG (106 aa)) is disordered. 2 positions are modified to phosphoserine: Ser-944 and Ser-987. The segment covering 1005 to 1020 (FSSSRPPTEMKQSGLG) has biased composition (polar residues). Phosphoserine is present on residues Ser-1037 and Ser-1073. The segment covering 1134–1143 (MHSSQASDNP) has biased composition (polar residues). Disordered stretches follow at residues 1134-1199 (MHSS…DQPS) and 1235-1257 (EPNQ…VSQP). Ser-1145 and Ser-1152 each carry phosphoserine. Residues 1168–1186 (SSGPSSTVSSAGPSSPTTV) are compositionally biased toward low complexity. Polar residues-rich tracts occupy residues 1187–1199 (DGNS…DQPS) and 1236–1250 (PNQS…TSQP).

It belongs to the histidine acid phosphatase family. VIP1 subfamily. In terms of tissue distribution, widely expressed, with a higher expression in skeletal muscle, heart and brain.

It is found in the cytoplasm. The protein resides in the cytosol. Its subcellular location is the cell membrane. It catalyses the reaction 1D-myo-inositol hexakisphosphate + ATP = 1-diphospho-1D-myo-inositol 2,3,4,5,6-pentakisphosphate + ADP. It carries out the reaction 5-diphospho-1D-myo-inositol 1,2,3,4,6-pentakisphosphate + ATP + H(+) = 1,5-bis(diphospho)-1D-myo-inositol 2,3,4,6-tetrakisphosphate + ADP. In terms of biological role, bifunctional inositol kinase that acts in concert with the IP6K kinases IP6K1, IP6K2 and IP6K3 to synthesize the diphosphate group-containing inositol pyrophosphates diphosphoinositol pentakisphosphate, PP-InsP5, and bis-diphosphoinositol tetrakisphosphate, (PP)2-InsP4. PP-InsP5 and (PP)2-InsP4, also respectively called InsP7 and InsP8, regulate a variety of cellular processes, including apoptosis, vesicle trafficking, cytoskeletal dynamics, exocytosis, insulin signaling and neutrophil activation. Phosphorylates inositol hexakisphosphate (InsP6) at position 1 to produce PP-InsP5 which is in turn phosphorylated by IP6Ks to produce (PP)2-InsP4. Alternatively, phosphorylates PP-InsP5 at position 1, produced by IP6Ks from InsP6, to produce (PP)2-InsP4. Activated when cells are exposed to hyperosmotic stress. This Homo sapiens (Human) protein is Inositol hexakisphosphate and diphosphoinositol-pentakisphosphate kinase 1.